Here is a 216-residue protein sequence, read N- to C-terminus: UPF0301 protein Nham_3550 (216 aa).

Basic residues predominate over residues 1–10 (MSAARKRPGT). The interval 1–25 (MSAARKRPGTGRRQTDDADTGAPDQ) is disordered.

Belongs to the UPF0301 (AlgH) family.

The chain is UPF0301 protein Nham_3550 from Nitrobacter hamburgensis (strain DSM 10229 / NCIMB 13809 / X14).